The chain runs to 489 residues: L-asparagine permease 1 (489 aa).

The next 12 membrane-spanning stretches (helical) occupy residues 25-45 (QLQM…GAGG), 49-69 (KAGP…FLIL), 100-120 (AVGW…TTAI), 137-157 (ILAL…VEWF), 162-182 (FWAA…GTVF), 210-230 (WLPL…VELV), 255-275 (IAIF…YTAY), 289-309 (IGFH…ALSS), 344-364 (YGGI…NAFK), 369-389 (FEIV…TIVL), 413-433 (SPYS…TMAS), and 439-459 (TWTV…WYLV).

The protein belongs to the amino acid-polyamine-organocation (APC) superfamily. Amino acid transporter (AAT) (TC 2.A.3.1) family.

It is found in the cell membrane. The protein is L-asparagine permease 1 (ansP1) of Mycobacterium tuberculosis (strain CDC 1551 / Oshkosh).